We begin with the raw amino-acid sequence, 370 residues long: Histidinol-phosphate aminotransferase 1 (370 aa).

An N6-(pyridoxal phosphate)lysine modification is found at lysine 229.

Belongs to the class-II pyridoxal-phosphate-dependent aminotransferase family. Histidinol-phosphate aminotransferase subfamily. Homodimer. The cofactor is pyridoxal 5'-phosphate.

The enzyme catalyses L-histidinol phosphate + 2-oxoglutarate = 3-(imidazol-4-yl)-2-oxopropyl phosphate + L-glutamate. It functions in the pathway amino-acid biosynthesis; L-histidine biosynthesis; L-histidine from 5-phospho-alpha-D-ribose 1-diphosphate: step 7/9. This Nitrosococcus oceani (strain ATCC 19707 / BCRC 17464 / JCM 30415 / NCIMB 11848 / C-107) protein is Histidinol-phosphate aminotransferase 1.